A 72-amino-acid polypeptide reads, in one-letter code: Protein kish-A (72 aa).

A signal peptide spans 1 to 26 (MSAIFNFQSLLIVILLLICTCAYLRS). At 27 to 53 (LVPNLLDKNKTGVLGIFWKCARIGERK) the chain is on the extracellular side. A glycan (N-linked (GlcNAc...) asparagine) is linked at N35. The helical transmembrane segment at 54–71 (SPYVAVCCVVMAFSILFM) threads the bilayer. A topological domain (cytoplasmic) is located at residue Q72.

It belongs to the KISH family.

The protein localises to the golgi apparatus membrane. In terms of biological role, involved in the early part of the secretory pathway. This chain is Protein kish-A (tmem167a), found in Xenopus laevis (African clawed frog).